A 595-amino-acid polypeptide reads, in one-letter code: Aspartate--tRNA(Asp/Asn) ligase (595 aa).

Glu175 is a binding site for L-aspartate. Positions 199-202 (QQYK) are aspartate. Residues Arg221 and His454 each contribute to the L-aspartate site. 221-223 (RDE) lines the ATP pocket. Glu488 provides a ligand contact to ATP. Arg495 is a binding site for L-aspartate. Residue 540-543 (GIDR) coordinates ATP.

The protein belongs to the class-II aminoacyl-tRNA synthetase family. Type 1 subfamily. In terms of assembly, homodimer.

The protein localises to the cytoplasm. The catalysed reaction is tRNA(Asx) + L-aspartate + ATP = L-aspartyl-tRNA(Asx) + AMP + diphosphate. Aspartyl-tRNA synthetase with relaxed tRNA specificity since it is able to aspartylate not only its cognate tRNA(Asp) but also tRNA(Asn). Reaction proceeds in two steps: L-aspartate is first activated by ATP to form Asp-AMP and then transferred to the acceptor end of tRNA(Asp/Asn). This chain is Aspartate--tRNA(Asp/Asn) ligase, found in Agrobacterium fabrum (strain C58 / ATCC 33970) (Agrobacterium tumefaciens (strain C58)).